We begin with the raw amino-acid sequence, 258 residues long: Short-chain dehydrogenase/reductase aba4 (258 aa).

Residues isoleucine 20, aspartate 66, and lysine 130 each coordinate NADP(+). Catalysis depends on proton donor residues serine 146 and tyrosine 160. The NADP(+) site is built by tyrosine 160, lysine 164, isoleucine 193, and threonine 195. The active-site Lowers pKa of active site Tyr is the lysine 164.

Belongs to the short-chain dehydrogenases/reductases (SDR) family.

Its pathway is hormone biosynthesis. In terms of biological role, short-chain dehydrogenase/reductase; part of the gene cluster that mediates the biosynthesis of abscisic acid (ABA), a phytohormone that acts antagonistically toward salicylic acid (SA), jasmonic acid (JA) and ethylene (ETH) signaling, to impede plant defense responses. The first step of the pathway catalyzes the reaction from farnesyl diphosphate to alpha-ionylideneethane performed by the alpha-ionylideneethane synthase aba3 via a three-step reaction mechanism involving 2 neutral intermediates, beta-farnesene and allofarnesene. The cytochrome P450 monooxygenase aba1 might then be involved in the conversion of alpha-ionylideneethane to alpha-ionylideneacetic acid. Alpha-ionylideneacetic acid is further converted to abscisic acid in 2 steps involving the cytochrome P450 monooxygenase aba2 and the short-chain dehydrogenase/reductase aba4, via the intermediates 1'-deoxy-ABA or 1',4'-trans-diol-ABA, depending on the order of action of these 2 enzymes. Aba2 is responsible for the hydroxylation of carbon atom C-1' and aba4 might be involved in the oxidation of the C-4' carbon atom. The protein is Short-chain dehydrogenase/reductase aba4 of Botryotinia fuckeliana (Noble rot fungus).